Consider the following 113-residue polypeptide: Integration host factor subunit alpha (113 aa).

Disordered regions lie at residues 59–80 (GNFQ…GETI) and 94–113 (QKLK…ASAE). Residues 104–113 (NSPPDPASAE) show a composition bias toward pro residues.

Belongs to the bacterial histone-like protein family. Heterodimer of an alpha and a beta chain.

In terms of biological role, this protein is one of the two subunits of integration host factor, a specific DNA-binding protein that functions in genetic recombination as well as in transcriptional and translational control. This Bordetella pertussis (strain Tohama I / ATCC BAA-589 / NCTC 13251) protein is Integration host factor subunit alpha.